Reading from the N-terminus, the 510-residue chain is D-alanine--D-alanyl carrier protein ligase (510 aa).

ATP is bound at residue 157 to 158 (TS). Asp202 contacts D-alanine. 297–302 (NTYGPT) serves as a coordination point for ATP. A D-alanine-binding site is contributed by Val306. The ATP site is built by Asp389 and Lys498. Residue Lys498 participates in D-alanine binding.

Belongs to the ATP-dependent AMP-binding enzyme family. DltA subfamily.

The protein localises to the cytoplasm. The catalysed reaction is holo-[D-alanyl-carrier protein] + D-alanine + ATP = D-alanyl-[D-alanyl-carrier protein] + AMP + diphosphate. The protein operates within cell wall biogenesis; lipoteichoic acid biosynthesis. Catalyzes the first step in the D-alanylation of lipoteichoic acid (LTA), the activation of D-alanine and its transfer onto the D-alanyl carrier protein (Dcp) DltC. In an ATP-dependent two-step reaction, forms a high energy D-alanyl-AMP intermediate, followed by transfer of the D-alanyl residue as a thiol ester to the phosphopantheinyl prosthetic group of the Dcp. D-alanylation of LTA plays an important role in modulating the properties of the cell wall in Gram-positive bacteria, influencing the net charge of the cell wall. The polypeptide is D-alanine--D-alanyl carrier protein ligase (Listeria monocytogenes serotype 4b (strain CLIP80459)).